The primary structure comprises 420 residues: uncharacterized protein (420 aa).

A run of 6 helical transmembrane segments spans residues Ile-26 to Ile-46, Ser-66 to Phe-86, Val-231 to Leu-251, Ile-276 to Leu-296, Gly-317 to Phe-337, and Ile-369 to Ile-389.

It belongs to the CbiQ family.

Its subcellular location is the cell membrane. This is an uncharacterized protein from Mycoplasma genitalium (strain ATCC 33530 / DSM 19775 / NCTC 10195 / G37) (Mycoplasmoides genitalium).